A 203-amino-acid polypeptide reads, in one-letter code: A-type ATP synthase subunit E (203 aa).

The protein belongs to the V-ATPase E subunit family. As to quaternary structure, has multiple subunits with at least A(3), B(3), C, D, E, F, H, I and proteolipid K(x).

The protein resides in the cell membrane. Its function is as follows. Component of the A-type ATP synthase that produces ATP from ADP in the presence of a proton gradient across the membrane. In Thermococcus kodakarensis (strain ATCC BAA-918 / JCM 12380 / KOD1) (Pyrococcus kodakaraensis (strain KOD1)), this protein is A-type ATP synthase subunit E.